A 247-amino-acid polypeptide reads, in one-letter code: UPF0280 protein Mevan_0550 (247 aa).

It belongs to the UPF0280 family.

This is UPF0280 protein Mevan_0550 from Methanococcus vannielii (strain ATCC 35089 / DSM 1224 / JCM 13029 / OCM 148 / SB).